Consider the following 378-residue polypeptide: Cln5-like protein 1 (378 aa).

A signal peptide spans 1–20 (MNKIIIFILFLISILQSVRG). N-linked (GlcNAc...) asparagine glycans are attached at residues N63, N93, N135, N181, N220, N226, N254, and N280. The helical transmembrane segment at 308 to 328 (WIFIIILLSFTTVYLVGGILI) threads the bilayer.

This sequence belongs to the CLN5 family.

It localises to the membrane. This is Cln5-like protein 1 (cln5la) from Dictyostelium discoideum (Social amoeba).